Consider the following 345-residue polypeptide: MARKWNLPFLLLPLVLGIPLVRGSNPLPLVVNTWPFKNATEAAWWTLVSGGSALDAVEKGCAMCEKEQCGGTVGFGGSPDEVGETTLDAMIMDGTAMDVGAVGGLRRIKNAIGVARKVLEHTTHTLLVGDSATKFAVSMGFTSEDLSTNTSRALHSDWLSRNCQPNYWRNVIPDPSKYCGPYKPPDFLEQNNRAHKEVDIHSHDTIGMVVIHKTGHTAAGTSTNGLKFKIPGRVGDSPIPGAGAYADDMAGAAAATGDGDTLLRFLPSYQAVEYMRGGDDPARACQKVISRIQKYYPKFFGAVICANVTGSYGAACNRLPTFTQFSFMVYNSLHNQAIEEKVDCM.

An N-terminal signal peptide occupies residues 1-23 (MARKWNLPFLLLPLVLGIPLVRG). The N-linked (GlcNAc...) asparagine glycan is linked to asparagine 38. Cysteine 64 and cysteine 69 are oxidised to a cystine. An N-linked (GlcNAc...) asparagine glycan is attached at asparagine 149. Cysteine 163 and cysteine 179 form a disulfide bridge. Catalysis depends on threonine 205, which acts as the Nucleophile. Residues 233–236 (RVGD) and 256–259 (TGDG) each bind substrate. Cysteine 285 and cysteine 305 are disulfide-bonded. An N-linked (GlcNAc...) asparagine glycan is attached at asparagine 307. Cysteine 316 and cysteine 344 form a disulfide bridge.

Belongs to the Ntn-hydrolase family. As to quaternary structure, heterotetramer of two alpha and two beta chains arranged as a dimer of alpha/beta heterodimers. In terms of processing, N-glycosylated. Post-translationally, cleaved into an alpha and beta chain by autocatalysis; this activates the enzyme. The N-terminal residue of the beta subunit is responsible for the nucleophile hydrolase activity.

The protein localises to the lysosome. It carries out the reaction N(4)-(beta-N-acetyl-D-glucosaminyl)-L-asparagine + H2O = N-acetyl-beta-D-glucosaminylamine + L-aspartate + H(+). Cleaves the GlcNAc-Asn bond which joins oligosaccharides to the peptide of asparagine-linked glycoproteins. This is N(4)-(Beta-N-acetylglucosaminyl)-L-asparaginase (Aga) from Rattus norvegicus (Rat).